The following is a 316-amino-acid chain: HTH-type transcriptional regulator PecT (316 aa).

Residues 11 to 68 (LDLDLLRTFVAVADLNTFAAAAVAVCRTQSAVSQQMQRLEQLIGKELFARHGRNKLLT) enclose the HTH lysR-type domain. Positions 28–47 (FAAAAVAVCRTQSAVSQQMQ) form a DNA-binding region, H-T-H motif. The segment at 293-316 (LPVSTGTESELREPPTDESLKDIT) is disordered. The segment covering 301 to 316 (SELREPPTDESLKDIT) has biased composition (basic and acidic residues).

It belongs to the LysR transcriptional regulatory family.

Regulates pectinase gene expression. The sequence is that of HTH-type transcriptional regulator PecT (pecT) from Dickeya dadantii (strain 3937) (Erwinia chrysanthemi (strain 3937)).